A 261-amino-acid chain; its full sequence is Early 39 kDa protein (261 aa).

The segment at 215-261 (SYVPTPVSNKKRRAPPSAPKKIAKQRRDTKPPPTYVSDNTQDTNMSE) is disordered. Polar residues predominate over residues 250-261 (VSDNTQDTNMSE).

The protein is Early 39 kDa protein of Orgyia pseudotsugata multicapsid polyhedrosis virus (OpMNPV).